The sequence spans 30 residues: Kappa-sparatoxin-Hv1b (30 aa).

Intrachain disulfides connect C3–C17, C10–C22, and C16–C26. W30 carries the post-translational modification Tryptophan amide.

The protein belongs to the neurotoxin 10 (Hwtx-1) family. 19 (HpTX2) subfamily. Expressed by the venom gland.

The protein resides in the secreted. Inhibitor of voltage-gated potassium channels of the Kv4/KCND family. Inhibition of Kv4.3/KCND3 and Kv4.2/KCND2 is strongly voltage-dependent, while inhibition of Kv4.1/KCND1 shows less voltage-dependence. Its binding site may be near the potassium channel voltage sensor. Also blocks calcium channels. The chain is Kappa-sparatoxin-Hv1b from Heteropoda venatoria (Brown huntsman spider).